The chain runs to 337 residues: Putative 2-aminoethylphosphonate-binding periplasmic protein (337 aa).

An N-terminal signal peptide occupies residues methionine 1–alanine 21.

This sequence belongs to the bacterial solute-binding protein 1 family.

Its subcellular location is the periplasm. Functionally, probably part of the PhnSTUV complex (TC 3.A.1.11.5) involved in 2-aminoethylphosphonate import. The chain is Putative 2-aminoethylphosphonate-binding periplasmic protein (phnS) from Salmonella typhimurium (strain LT2 / SGSC1412 / ATCC 700720).